Reading from the N-terminus, the 424-residue chain is Tyrosine--tRNA ligase (424 aa).

Tyr-33 lines the L-tyrosine pocket. The 'HIGH' region motif lies at Pro-38–His-47. The L-tyrosine site is built by Tyr-170 and Gln-174. The short motif at Lys-230–Thr-234 is the 'KMSKS' region element. Position 233 (Lys-233) interacts with ATP. The S4 RNA-binding domain maps to Met-357–Val-424.

Belongs to the class-I aminoacyl-tRNA synthetase family. TyrS type 1 subfamily. As to quaternary structure, homodimer.

The protein localises to the cytoplasm. It carries out the reaction tRNA(Tyr) + L-tyrosine + ATP = L-tyrosyl-tRNA(Tyr) + AMP + diphosphate + H(+). Its function is as follows. Catalyzes the attachment of tyrosine to tRNA(Tyr) in a two-step reaction: tyrosine is first activated by ATP to form Tyr-AMP and then transferred to the acceptor end of tRNA(Tyr). The protein is Tyrosine--tRNA ligase of Roseiflexus castenholzii (strain DSM 13941 / HLO8).